Consider the following 334-residue polypeptide: L-lactate dehydrogenase B chain (334 aa).

NAD(+)-binding positions include 30–58 (GQVGMACAVSILLRDLCDELALVDVMEDR) and Arg100. Substrate contacts are provided by Arg107, Asn139, and Arg170. Asn139 contributes to the NAD(+) binding site. The Proton acceptor role is filled by His194. A substrate-binding site is contributed by Thr249.

The protein belongs to the LDH/MDH superfamily. LDH family. Homotetramer.

It localises to the cytoplasm. It catalyses the reaction (S)-lactate + NAD(+) = pyruvate + NADH + H(+). Its pathway is fermentation; pyruvate fermentation to lactate; (S)-lactate from pyruvate: step 1/1. Interconverts simultaneously and stereospecifically pyruvate and lactate with concomitant interconversion of NADH and NAD(+). This is L-lactate dehydrogenase B chain (ldhb) from Fundulus heteroclitus (Killifish).